Consider the following 662-residue polypeptide: UvrABC system protein B (662 aa).

One can recognise a Helicase ATP-binding domain in the interval 25–182 (KGIEKREKFQ…KKLVEIQYER (158 aa)). Position 38-45 (38-45 (GVTGSGKT)) interacts with ATP. The Beta-hairpin motif lies at 91 to 114 (YYDYYQPEAYVAQSDTYIEKDASI). Positions 429-595 (QIDDLYTSIQ…TIIKDIREVI (167 aa)) constitute a Helicase C-terminal domain. The UVR domain occupies 622–657 (DKLIEKYEEEMKEAAQNLQFEKAAHLRDVIYKLKKD).

It belongs to the UvrB family. In terms of assembly, forms a heterotetramer with UvrA during the search for lesions. Interacts with UvrC in an incision complex.

It is found in the cytoplasm. Its function is as follows. The UvrABC repair system catalyzes the recognition and processing of DNA lesions. A damage recognition complex composed of 2 UvrA and 2 UvrB subunits scans DNA for abnormalities. Upon binding of the UvrA(2)B(2) complex to a putative damaged site, the DNA wraps around one UvrB monomer. DNA wrap is dependent on ATP binding by UvrB and probably causes local melting of the DNA helix, facilitating insertion of UvrB beta-hairpin between the DNA strands. Then UvrB probes one DNA strand for the presence of a lesion. If a lesion is found the UvrA subunits dissociate and the UvrB-DNA preincision complex is formed. This complex is subsequently bound by UvrC and the second UvrB is released. If no lesion is found, the DNA wraps around the other UvrB subunit that will check the other stand for damage. This chain is UvrABC system protein B, found in Clostridium botulinum (strain Langeland / NCTC 10281 / Type F).